The sequence spans 131 residues: Agouti-related protein (131 aa).

The N-terminal stretch at 1-20 (MLTAMLLSCVLLLALPPTLG) is a signal peptide. Positions 21–81 (VQMGVAPLKG…VLDPQNRESR (61 aa)) are excised as a propeptide. 5 disulfide bridges follow: Cys86–Cys101, Cys93–Cys107, Cys100–Cys118, Cys104–Cys128, and Cys109–Cys116. Residues 86 to 128 (CVRLHESCLGQQVPCCDPCATCYCRFFNAFCYCRKLGTATNLC) form the Agouti domain. Residues 110 to 112 (RFF) form an interaction with melanocortin receptors region.

As to quaternary structure, interacts with melanocortin receptors MC3R, MC4R and MC5R. In terms of tissue distribution, expressed in arcuate nucleus and median eminence, adrenal gland (medulla), hypothalamus, testis, and lung.

The protein localises to the secreted. Its subcellular location is the golgi apparatus lumen. In terms of biological role, plays a role in weight homeostasis. Involved in the control of feeding behavior through the central melanocortin system. Acts as alpha melanocyte-stimulating hormone antagonist by inhibiting cAMP production mediated by stimulation of melanocortin receptors within the hypothalamus and adrenal gland. Has very low activity with MC5R. Is an inverse agonist for MC3R and MC4R being able to suppress their constitutive activity. It promotes MC3R and MC4R endocytosis in an arrestin-dependent manner. This is Agouti-related protein (Agrp) from Mus musculus (Mouse).